The chain runs to 521 residues: Glutamate--cysteine ligase (521 aa).

The protein belongs to the glutamate--cysteine ligase type 1 family. Type 1 subfamily.

It carries out the reaction L-cysteine + L-glutamate + ATP = gamma-L-glutamyl-L-cysteine + ADP + phosphate + H(+). Its pathway is sulfur metabolism; glutathione biosynthesis; glutathione from L-cysteine and L-glutamate: step 1/2. The polypeptide is Glutamate--cysteine ligase (gshA) (Buchnera aphidicola subsp. Baizongia pistaciae (strain Bp)).